The sequence spans 145 residues: D-aminoacyl-tRNA deacylase (145 aa).

The Gly-cisPro motif, important for rejection of L-amino acids signature appears at 137 to 138; sequence GP.

This sequence belongs to the DTD family. In terms of assembly, homodimer.

The protein resides in the cytoplasm. The catalysed reaction is glycyl-tRNA(Ala) + H2O = tRNA(Ala) + glycine + H(+). It carries out the reaction a D-aminoacyl-tRNA + H2O = a tRNA + a D-alpha-amino acid + H(+). Its function is as follows. An aminoacyl-tRNA editing enzyme that deacylates mischarged D-aminoacyl-tRNAs. Also deacylates mischarged glycyl-tRNA(Ala), protecting cells against glycine mischarging by AlaRS. Acts via tRNA-based rather than protein-based catalysis; rejects L-amino acids rather than detecting D-amino acids in the active site. By recycling D-aminoacyl-tRNA to D-amino acids and free tRNA molecules, this enzyme counteracts the toxicity associated with the formation of D-aminoacyl-tRNA entities in vivo and helps enforce protein L-homochirality. In Exiguobacterium sibiricum (strain DSM 17290 / CCUG 55495 / CIP 109462 / JCM 13490 / 255-15), this protein is D-aminoacyl-tRNA deacylase.